A 705-amino-acid chain; its full sequence is Elongation factor G (705 aa).

The tr-type G domain occupies 8 to 290 (HRYRNIGIMA…GVIHLLPSPA (283 aa)). GTP contacts are provided by residues 17 to 24 (AHIDAGKT), 88 to 92 (DTPGH), and 142 to 145 (NKMD).

The protein belongs to the TRAFAC class translation factor GTPase superfamily. Classic translation factor GTPase family. EF-G/EF-2 subfamily.

The protein localises to the cytoplasm. Catalyzes the GTP-dependent ribosomal translocation step during translation elongation. During this step, the ribosome changes from the pre-translocational (PRE) to the post-translocational (POST) state as the newly formed A-site-bound peptidyl-tRNA and P-site-bound deacylated tRNA move to the P and E sites, respectively. Catalyzes the coordinated movement of the two tRNA molecules, the mRNA and conformational changes in the ribosome. This Xylella fastidiosa (strain M23) protein is Elongation factor G.